The sequence spans 419 residues: Acyl-[acyl-carrier-protein] hydrolase FATB1, chloroplastic (419 aa).

The transit peptide at 1 to 50 (MVAAAATSAFFPVPAPGTSPKPGKSGNWPSSLSPTFKPKSIPNGGFQVKA) directs the protein to the chloroplast. Residues 1 to 84 (MVAAAATSAF…DTSSSPPPRA (84 aa)) form a disordered region. A compositionally biased stretch (polar residues) spans 61 to 78 (SAVNLKSGSLNTQEDTSS). Catalysis depends on residues N315, H317, and C352. Residues 390-419 (SRTEWRPKNAGTNGAISTSTAKTSNGNSVS) are disordered. The span at 399–419 (AGTNGAISTSTAKTSNGNSVS) shows a compositional bias: polar residues.

It belongs to the acyl-ACP thioesterase family.

The protein resides in the plastid. Its subcellular location is the chloroplast. The enzyme catalyses octanoyl-[ACP] + H2O = octanoate + holo-[ACP] + H(+). It carries out the reaction decanoyl-[ACP] + H2O = decanoate + holo-[ACP] + H(+). Plays an essential role in chain termination during de novo fatty acid synthesis. Possesses thioesterase activity for short chain acyl-ACPs. Substrate preference is 8:0 &gt; 10:0. The protein is Acyl-[acyl-carrier-protein] hydrolase FATB1, chloroplastic of Cuphea viscosissima (Blue waxweed).